A 960-amino-acid polypeptide reads, in one-letter code: Dynamin-like GTPase OPA1, mitochondrial (960 aa).

A mitochondrion-targeting transit peptide spans 1-87 (MWRAGRAALA…TKYGYQPRRN (87 aa)). The Mitochondrial matrix segment spans residues 88-96 (FWPARLAAR). Residues 97–113 (LLKLRYIILGSAVGGGY) traverse the membrane as a helical segment. The Mitochondrial intermembrane portion of the chain corresponds to 114–770 (TAKKTFDEWK…NAIENMIGPD (657 aa)). Positions 210–254 (SDKEKIDQLQEELLHTQLKYQRILERLEKENKELRKLVLQKDDKG) form a coiled coil. The LQQQIQ motif motif lies at 217 to 222 (QLQEEL). Position 228 is an N6-acetyllysine (Lys228). The LQQQIQ motif signature appears at 234 to 239 (ERLEKE). The region spanning 285–561 (QDHLPRVVVV…FWKMVRESVE (277 aa)) is the Dynamin-type G domain. The interval 295 to 302 (GDQSAGKT) is G1 motif. GTP contacts are provided by Ser298, Gly300, Lys301, Thr302, Ser303, and Gly317. A Mg(2+)-binding site is contributed by Thr302. The tract at residues 321–324 (MMTR) is G2 motif. Thr323 and Asp398 together coordinate Mg(2+). The segment at 398 to 401 (DLPG) is G3 motif. The interval 467–470 (TKVD) is G4 motif. GTP-binding residues include Lys468, Asp470, and Thr503. The G5 motif stretch occupies residues 501–504 (VVTG). Stalk region stretches follow at residues 589 to 836 (DRNE…IKDT) and 874 to 928 (CNDV…VKLL). The interval 736–856 (SDKQQWDAAI…KTALNHCNLC (121 aa)) is paddle region. The stretch at 771 to 781 (WKKRWIYWKNR) is an intramembrane region. The Mitochondrial intermembrane segment spans residues 782 to 960 (TQEQCVHNET…AFIEALHQEK (179 aa)). The cysteines at positions 856 and 874 are disulfide-linked. A coiled-coil region spans residues 895-960 (RQQLTNTEVR…AFIEALHQEK (66 aa)).

It belongs to the TRAFAC class dynamin-like GTPase superfamily. Dynamin/Fzo/YdjA family. Oligomeric complex consisting of membrane-bound and soluble forms of OPA1. Interacts with RCC1L; RCC1L acts as a guanine nucleotide exchange factor (GEF) for OPA1 by exchanging bound GDP for free GTP. Interacts with CHCHD3 and IMMT; these interactions occur preferentially with soluble OPA1 forms. Interacts with PRELID1. In terms of processing, cleaved by OMA1 or YME1L downstream of the transmembrane region in response to different signals to generate soluble forms. Cleaved by OMA1 at position S1 following stress conditions, generating the short soluble form (Dynamin-like GTPase OPA1, short form; S-OPA1). AFG3L2 is involved in the regulation of OMA1-dependent processing of OPA1. PARL-dependent proteolytic processing releases an antiapoptotic soluble form not required for mitochondrial fusion. Cleavage at position S2 by YME1L is required to mediate oxidative phosphorylation (OXPHOS)-induced mitochondrial fusion. Cleavage occurs in the sequence motif Leu-Gln-Gln-Gln-Ile-Gln (LQQQIQ). In terms of tissue distribution, expressed in brain as well as retinal ganglion, starbust amacrine and horizontal cells of the retina. Absent from nerve fibers and photoreceptor cells of the retina.

The protein localises to the mitochondrion inner membrane. It is found in the mitochondrion intermembrane space. It carries out the reaction GTP + H2O = GDP + phosphate + H(+). With respect to regulation, activated by guanine nucleotide exchange factor RCC1L. In terms of biological role, dynamin-related GTPase that is essential for normal mitochondrial morphology by mediating fusion of the mitochondrial inner membranes, regulating cristae morphology and maintaining respiratory chain function. Exists in two forms: the transmembrane, long form (Dynamin-like GTPase OPA1, long form; L-OPA1), which is tethered to the inner mitochondrial membrane, and the short soluble form (Dynamin-like GTPase OPA1, short form; S-OPA1), which results from proteolytic cleavage and localizes in the intermembrane space. Both forms (L-OPA1 and S-OPA1) cooperate to catalyze the fusion of the mitochondrial inner membrane. The equilibrium between L-OPA1 and S-OPA1 is essential: excess levels of S-OPA1, produced by cleavage by OMA1 following loss of mitochondrial membrane potential, lead to an impaired equilibrium between L-OPA1 and S-OPA1, inhibiting mitochondrial fusion. The balance between L-OPA1 and S-OPA1 also influences cristae shape and morphology. Involved in remodeling cristae and the release of cytochrome c during apoptosis. Proteolytic processing by PARL in response to intrinsic apoptotic signals may lead to disassembly of OPA1 oligomers and release of the caspase activator cytochrome C (CYCS) into the mitochondrial intermembrane space. Acts as a regulator of T-helper Th17 cells, which are characterized by cells with fused mitochondria with tight cristae, by mediating mitochondrial membrane remodeling: OPA1 is required for interleukin-17 (IL-17) production. Its role in mitochondrial morphology is required for mitochondrial genome maintenance. Functionally, constitutes the transmembrane long form (L-OPA1) that plays a central role in mitochondrial inner membrane fusion and cristae morphology. L-OPA1 and the soluble short form (S-OPA1) form higher-order helical assemblies that coordinate the fusion of mitochondrial inner membranes. Inner membrane-anchored L-OPA1 molecules initiate membrane remodeling by recruiting soluble S-OPA1 to rapidly polymerize into a flexible cylindrical scaffold encaging the mitochondrial inner membrane. Once at the membrane surface, the formation of S-OPA1 helices induce bilayer curvature. OPA1 dimerization through the paddle region, which inserts into cardiolipin-containing membrane, promotes GTP hydrolysis and the helical assembly of a flexible OPA1 lattice on the membrane, which drives membrane curvature and mitochondrial fusion. Plays a role in the maintenance and remodeling of mitochondrial cristae, some invaginations of the mitochondrial inner membrane that provide an increase in the surface area. Probably acts by forming helical filaments at the inside of inner membrane tubes with the shape and dimensions of crista junctions. The equilibrium between L-OPA1 and S-OPA1 influences cristae shape and morphology: increased L-OPA1 levels promote cristae stacking and elongated mitochondria, while increased S-OPA1 levels correlated with irregular cristae packing and round mitochondria shape. Its function is as follows. Constitutes the soluble short form (S-OPA1) generated by cleavage by OMA1, which plays a central role in mitochondrial inner membrane fusion and cristae morphology. The transmembrane long form (L-OPA1) and the S-OPA1 form higher-order helical assemblies that coordinate the fusion of mitochondrial inner membranes. Inner membrane-anchored L-OPA1 molecules initiate membrane remodeling by recruiting soluble S-OPA1 to rapidly polymerize into a flexible cylindrical scaffold encaging the mitochondrial inner membrane. Once at the membrane surface, the formation of S-OPA1 helices induce bilayer curvature. OPA1 dimerization through the paddle region, which inserts into cardiolipin-containing membrane, promotes GTP hydrolysis and the helical assembly of a flexible OPA1 lattice on the membrane, which drives membrane curvature and mitochondrial fusion. Excess levels of S-OPA1 produced by cleavage by OMA1 following stress conditions that induce loss of mitochondrial membrane potential, lead to an impaired equilibrium between L-OPA1 and S-OPA1, thereby inhibiting mitochondrial fusion. Involved in mitochondrial safeguard in response to transient mitochondrial membrane depolarization by mediating flickering: cleavage by OMA1 leads to excess production of S-OPA1, preventing mitochondrial hyperfusion. Plays a role in the maintenance and remodeling of mitochondrial cristae, some invaginations of the mitochondrial inner membrane that provide an increase in the surface area. Probably acts by forming helical filaments at the inside of inner membrane tubes with the shape and dimensions of crista junctions. The equilibrium between L-OPA1 and S-OPA1 influences cristae shape and morphology: increased L-OPA1 levels promote cristae stacking and elongated mitochondria, while increased S-OPA1 levels correlated with irregular cristae packing and round mitochondria shape. Isoforms that contain the alternative exon 4b are required for mitochondrial genome maintenance, possibly by anchoring the mitochondrial nucleoids to the inner mitochondrial membrane. The sequence is that of Dynamin-like GTPase OPA1, mitochondrial from Rattus norvegicus (Rat).